The following is a 372-amino-acid chain: Peptide chain release factor 2 (372 aa).

The residue at position 253 (Gln253) is an N5-methylglutamine.

This sequence belongs to the prokaryotic/mitochondrial release factor family. In terms of processing, methylated by PrmC. Methylation increases the termination efficiency of RF2.

Its subcellular location is the cytoplasm. Peptide chain release factor 2 directs the termination of translation in response to the peptide chain termination codons UGA and UAA. The protein is Peptide chain release factor 2 of Nocardia farcinica (strain IFM 10152).